A 218-amino-acid polypeptide reads, in one-letter code: uncharacterized protein (218 aa).

This is an uncharacterized protein from Methanocaldococcus jannaschii (strain ATCC 43067 / DSM 2661 / JAL-1 / JCM 10045 / NBRC 100440) (Methanococcus jannaschii).